The primary structure comprises 262 residues: Acyl-[acyl-carrier-protein]--UDP-N-acetylglucosamine O-acyltransferase (262 aa).

The protein belongs to the transferase hexapeptide repeat family. LpxA subfamily. In terms of assembly, homotrimer.

Its subcellular location is the cytoplasm. The catalysed reaction is a (3R)-hydroxyacyl-[ACP] + UDP-N-acetyl-alpha-D-glucosamine = a UDP-3-O-[(3R)-3-hydroxyacyl]-N-acetyl-alpha-D-glucosamine + holo-[ACP]. Its pathway is glycolipid biosynthesis; lipid IV(A) biosynthesis; lipid IV(A) from (3R)-3-hydroxytetradecanoyl-[acyl-carrier-protein] and UDP-N-acetyl-alpha-D-glucosamine: step 1/6. Functionally, involved in the biosynthesis of lipid A, a phosphorylated glycolipid that anchors the lipopolysaccharide to the outer membrane of the cell. This is Acyl-[acyl-carrier-protein]--UDP-N-acetylglucosamine O-acyltransferase from Cronobacter sakazakii (strain ATCC BAA-894) (Enterobacter sakazakii).